The following is a 398-amino-acid chain: Succinate--CoA ligase [ADP-forming] subunit beta (398 aa).

The 245-residue stretch at 9 to 253 folds into the ATP-grasp domain; sequence KQVLAKYGVA…ESEEDPAELE (245 aa). Residues Lys-46, 53-55, Glu-108, Cys-111, and Glu-116 each bind ATP; that span reads GRG. Mg(2+) is bound by residues Asn-208 and Asp-222. Residues Asn-273 and 330–332 each bind substrate; that span reads GIM.

Belongs to the succinate/malate CoA ligase beta subunit family. As to quaternary structure, heterotetramer of two alpha and two beta subunits. Requires Mg(2+) as cofactor.

The enzyme catalyses succinate + ATP + CoA = succinyl-CoA + ADP + phosphate. It carries out the reaction GTP + succinate + CoA = succinyl-CoA + GDP + phosphate. Its pathway is carbohydrate metabolism; tricarboxylic acid cycle; succinate from succinyl-CoA (ligase route): step 1/1. Functionally, succinyl-CoA synthetase functions in the citric acid cycle (TCA), coupling the hydrolysis of succinyl-CoA to the synthesis of either ATP or GTP and thus represents the only step of substrate-level phosphorylation in the TCA. The beta subunit provides nucleotide specificity of the enzyme and binds the substrate succinate, while the binding sites for coenzyme A and phosphate are found in the alpha subunit. The sequence is that of Succinate--CoA ligase [ADP-forming] subunit beta from Paramagnetospirillum magneticum (strain ATCC 700264 / AMB-1) (Magnetospirillum magneticum).